Reading from the N-terminus, the 277-residue chain is Caspase-3 (277 aa).

The residue at position 1 (methionine 1) is an N-acetylmethionine. Propeptides lie at residues 1 to 9 and 10 to 28; these read MENNETSVD and AKSIKNLETQTIHGSKSMD. N6-acetyllysine is present on lysine 11. Serine 26 is modified (phosphoserine). Catalysis depends on residues histidine 121 and cysteine 163. Cysteine 163 bears the S-nitrosocysteine; in inhibited form mark.

The protein belongs to the peptidase C14A family. As to quaternary structure, heterotetramer that consists of two anti-parallel arranged heterodimers, each one formed by a 17 kDa (p17) and a 12 kDa (p12) subunit. Interacts with BIRC6/bruce. Post-translationally, cleavage by granzyme B, caspase-6, caspase-8 and caspase-10 generates the two active subunits. Additional processing of the propeptides is likely due to the autocatalytic activity of the activated protease. Active heterodimers between the small subunit of caspase-7 protease and the large subunit of caspase-3 also occur and vice versa. In terms of processing, S-nitrosylated on its catalytic site cysteine in unstimulated cell lines and denitrosylated upon activation of the Fas apoptotic pathway, associated with an increase in intracellular caspase activity. Fas therefore activates caspase-3 not only by inducing the cleavage of the caspase zymogen to its active subunits, but also by stimulating the denitrosylation of its active site thiol. Ubiquitinated by BIRC6; this activity is inhibited by DIABLO/SMAC.

The protein localises to the cytoplasm. The enzyme catalyses Strict requirement for an Asp residue at positions P1 and P4. It has a preferred cleavage sequence of Asp-Xaa-Xaa-Asp-|- with a hydrophobic amino-acid residue at P2 and a hydrophilic amino-acid residue at P3, although Val or Ala are also accepted at this position.. Its activity is regulated as follows. Inhibited by BIRC6; following inhibition of BIRC6-caspase binding by DIABLO/SMAC, BIRC6 is subjected to caspase cleavage, leading to an increase in active caspases. Its function is as follows. Involved in the activation cascade of caspases responsible for apoptosis execution. At the onset of apoptosis, it proteolytically cleaves poly(ADP-ribose) polymerase PARP1 at a '216-Asp-|-Gly-217' bond. Cleaves and activates sterol regulatory element binding proteins (SREBPs) between the basic helix-loop-helix leucine zipper domain and the membrane attachment domain. Cleaves and activates caspase-6, -7 and -9 (CASP6, CASP7 and CASP9, respectively). Cleaves and inactivates interleukin-18 (IL18). Triggers cell adhesion in sympathetic neurons through RET cleavage. Cleaves IL-1 beta between an Asp and an Ala, releasing the mature cytokine which is involved in a variety of inflammatory processes. Cleaves and inhibits serine/threonine-protein kinase AKT1 in response to oxidative stress. Acts as an inhibitor of type I interferon production during virus-induced apoptosis by mediating cleavage of antiviral proteins CGAS, IRF3 and MAVS, thereby preventing cytokine overproduction. Also involved in pyroptosis by mediating cleavage and activation of gasdermin-E (GSDME). Cleaves XRCC4 and phospholipid scramblase proteins XKR4, XKR8 and XKR9, leading to promote phosphatidylserine exposure on apoptotic cell surface. Cleaves BIRC6 following inhibition of BIRC6-caspase binding by DIABLO/SMAC. The sequence is that of Caspase-3 (CASP3) from Oryctolagus cuniculus (Rabbit).